A 222-amino-acid chain; its full sequence is Leucyl/phenylalanyl-tRNA--protein transferase (222 aa).

The protein belongs to the L/F-transferase family.

The protein localises to the cytoplasm. The enzyme catalyses N-terminal L-lysyl-[protein] + L-leucyl-tRNA(Leu) = N-terminal L-leucyl-L-lysyl-[protein] + tRNA(Leu) + H(+). The catalysed reaction is N-terminal L-arginyl-[protein] + L-leucyl-tRNA(Leu) = N-terminal L-leucyl-L-arginyl-[protein] + tRNA(Leu) + H(+). It catalyses the reaction L-phenylalanyl-tRNA(Phe) + an N-terminal L-alpha-aminoacyl-[protein] = an N-terminal L-phenylalanyl-L-alpha-aminoacyl-[protein] + tRNA(Phe). Its function is as follows. Functions in the N-end rule pathway of protein degradation where it conjugates Leu, Phe and, less efficiently, Met from aminoacyl-tRNAs to the N-termini of proteins containing an N-terminal arginine or lysine. This Legionella pneumophila (strain Lens) protein is Leucyl/phenylalanyl-tRNA--protein transferase.